A 716-amino-acid polypeptide reads, in one-letter code: Segment polarity protein dishevelled homolog DVL-3 (716 aa).

Residues 1–82 (MGETKIIYHL…RVVSWLVSAE (82 aa)) form the DIX domain. Arg27 is modified (omega-N-methylarginine). Residues Ser48 and Ser125 each carry the phosphoserine modification. Positions 85–235 (HPEPAPFCAD…VSRIERSSSF (151 aa)) are disordered. Over residues 142-156 (QRERPRRRDGPEHAA) the composition is skewed to basic and acidic residues. Residues 175-190 (SSSTLMSSELETTSFF) are compositionally biased toward low complexity. At Ser192 the chain carries Phosphoserine. The segment covering 199 to 212 (SRFSSSTEQSSASR) has biased composition (low complexity). Arg212 is modified (omega-N-methylarginine). Residues 213 to 226 (LMRRHKRRRRKQKV) show a composition bias toward basic residues. The region spanning 249 to 321 (TVTLNMEKYN…NDDAVRVLRE (73 aa)) is the PDZ domain. Asymmetric dimethylarginine; by PRMT1; alternate is present on Arg271. A symmetric dimethylarginine; by PRMT7; alternate mark is found at Arg271 and Arg342. Arg342 bears the Omega-N-methylarginine; alternate mark. Thr346 is subject to Phosphothreonine. Residues 422–496 (PESGLEVRDR…SEQCYYIFGD (75 aa)) enclose the DEP domain. The segment at 546-691 (PYNPHPGFPE…PPGRDLASVP (146 aa)) is disordered. A compositionally biased stretch (low complexity) spans 565–581 (ASSQHSEGSRSSGSNRS). Composition is skewed to basic and acidic residues over residues 582 to 595 (GSDR…KAGD) and 604 to 622 (ESDH…RAPS). Symmetric dimethylarginine; by PRMT7 is present on Arg614. Composition is skewed to pro residues over residues 653–663 (YGPPGVPPLYG) and 670–682 (TPPP…PGAP). A Phosphoserine modification is found at Ser697. Residue Arg698 is modified to Omega-N-methylarginine; alternate. At Arg698 the chain carries Dimethylated arginine; alternate. Position 700 is a phosphoserine (Ser700).

Belongs to the DSH family. Interacts (via the PDZ domain) with the C-terminal regions of VANGL1 and VANGL2. Interacts (via the region containing both the PDZ and DEP domains) with LRRFIP2; the DIX domain may inhibit this interaction. Interacts with CYLD. Interacts with CEP164 and DAB2. Interacts with DCDC2. Interacts with FOXK1 and FOXK2. Interacts with DAAM2. In terms of processing, ubiquitinated. Deubiquitinated by CYLD, which acts on 'Lys-63'-linked ubiquitin chains. Post-translationally, phosphorylated by CSNK1D. Arginine methylation may function as a switch in regulation of function in Wnt signaling. Ubiquitous.

The protein resides in the cytoplasm. Its function is as follows. Involved in the signal transduction pathway mediated by multiple Wnt genes. The sequence is that of Segment polarity protein dishevelled homolog DVL-3 (Dvl3) from Mus musculus (Mouse).